A 113-amino-acid polypeptide reads, in one-letter code: MQAKAVARTVRIAPRKARLVMDLIRGKQVGEAVSILNLTPKAASPIIEKVLKSAIANAEHNYELDANSLVITQAFVDEGPTLKRFRPRAMGRASAINKRTSHITIVVSEKKEG.

The protein belongs to the universal ribosomal protein uL22 family. As to quaternary structure, part of the 50S ribosomal subunit.

This protein binds specifically to 23S rRNA; its binding is stimulated by other ribosomal proteins, e.g. L4, L17, and L20. It is important during the early stages of 50S assembly. It makes multiple contacts with different domains of the 23S rRNA in the assembled 50S subunit and ribosome. Its function is as follows. The globular domain of the protein is located near the polypeptide exit tunnel on the outside of the subunit, while an extended beta-hairpin is found that lines the wall of the exit tunnel in the center of the 70S ribosome. The polypeptide is Large ribosomal subunit protein uL22 (Bacillus pumilus (strain SAFR-032)).